A 694-amino-acid polypeptide reads, in one-letter code: Ferric reductase transmembrane component 5 (694 aa).

Residues 1 to 19 form the signal peptide; it reads MLFARLVLLLVYLAPGSLA. Over 20-163 the chain is Extracellular; sequence KPASTKKRTQ…LDNIDKGNVY (144 aa). Asn-117 is a glycosylation site (N-linked (GlcNAc...) asparagine). The helical transmembrane segment at 164–184 threads the bilayer; the sequence is GVTICLYWIGVLFIAAVYHFL. The Cytoplasmic segment spans residues 185–222; sequence NFSRLKQTVFKNKVSAFLRGHYVLPALVHNHAMSVGRW. The helical transmembrane segment at 223 to 243 threads the bilayer; sequence FFIGLVPTRLETLVLFGYVLL. Residues 244-267 are Extracellular-facing; the sequence is HGFLLSSYNFDHNELLSDRRSQVL. Residues 268–288 traverse the membrane as a helical segment; sequence IFLSDRAGILAFAHFPLIVLF. The Ferric oxidoreductase domain occupies 274–408; sequence AGILAFAHFP…GWGEWIMACA (135 aa). At 289-311 the chain is on the cytoplasmic side; the sequence is GGKNSTMTWLTGIRYTAFITYHK. Positions 310 and 324 each coordinate heme. Residues 312–334 form a helical membrane-spanning segment; sequence WLGRFMLVDCTIHAIGYTYHAYI. The Extracellular portion of the chain corresponds to 335-347; it reads ENYWKYVKYSDLW. Residues 348–368 traverse the membrane as a helical segment; it reads TSGRHAMIIVGILVFFSFFFF. Over 369-371 the chain is Cytoplasmic; sequence RRH. Residues 372-392 form a helical membrane-spanning segment; the sequence is YYELFVITHIILAIGFFHACW. Heme is bound by residues His-380 and His-394. Topologically, residues 393 to 403 are extracellular; the sequence is KHCYKLGWGEW. The helical transmembrane segment at 404–424 threads the bilayer; sequence IMACALFWIADRILRLIKIAI. The FAD-binding FR-type domain occupies 409-528; the sequence is LFWIADRILR…EGPYGQSTRT (120 aa). Residues 425–694 lie on the Cytoplasmic side of the membrane; sequence FGMPWAKLKL…IEYVEEFQNW (270 aa). 473 to 479 contributes to the FAD binding site; that stretch reads HPFTVMD. Residues 520–523 and 660–661 each bind NADP(+); these read GPYG and CG.

It belongs to the ferric reductase (FRE) family. FAD is required as a cofactor.

It is found in the cell membrane. The enzyme catalyses 2 a Fe(II)-siderophore + NADP(+) + H(+) = 2 a Fe(III)-siderophore + NADPH. In terms of biological role, metalloreductase responsible for reducing extracellular iron and copper prior to import. Catalyzes the reductive uptake of Fe(3+)-salts and Fe(3+) bound to catecholate or hydroxamate siderophores. Fe(3+) is reduced to Fe(2+), which then dissociates from the siderophore and can be imported by the high-affinity Fe(2+) transport complex in the plasma membrane. In Saccharomyces cerevisiae (strain ATCC 204508 / S288c) (Baker's yeast), this protein is Ferric reductase transmembrane component 5 (FRE5).